Here is a 283-residue protein sequence, read N- to C-terminus: Shikimate dehydrogenase (NADP(+)) (283 aa).

Shikimate-binding positions include 18–20 (SYS) and threonine 66. The active-site Proton acceptor is the lysine 70. Shikimate-binding residues include asparagine 91 and aspartate 106. NADP(+) contacts are provided by residues 130 to 134 (GAGGA) and methionine 225. Shikimate is bound at residue tyrosine 227. Residue glycine 248 coordinates NADP(+).

Belongs to the shikimate dehydrogenase family. Homodimer.

It catalyses the reaction shikimate + NADP(+) = 3-dehydroshikimate + NADPH + H(+). The protein operates within metabolic intermediate biosynthesis; chorismate biosynthesis; chorismate from D-erythrose 4-phosphate and phosphoenolpyruvate: step 4/7. Functionally, involved in the biosynthesis of the chorismate, which leads to the biosynthesis of aromatic amino acids. Catalyzes the reversible NADPH linked reduction of 3-dehydroshikimate (DHSA) to yield shikimate (SA). In Pelodictyon phaeoclathratiforme (strain DSM 5477 / BU-1), this protein is Shikimate dehydrogenase (NADP(+)).